A 118-amino-acid polypeptide reads, in one-letter code: uncharacterized protein (118 aa).

This is an uncharacterized protein from Escherichia coli O157:H7.